The chain runs to 143 residues: Flagellar assembly factor FliW (143 aa).

Belongs to the FliW family. Interacts with translational regulator CsrA and flagellin(s).

It localises to the cytoplasm. Its function is as follows. Acts as an anti-CsrA protein, binds CsrA and prevents it from repressing translation of its target genes, one of which is flagellin. Binds to flagellin and participates in the assembly of the flagellum. This chain is Flagellar assembly factor FliW, found in Clostridium botulinum (strain Okra / Type B1).